A 189-amino-acid chain; its full sequence is Pyridoxal 5'-phosphate synthase subunit PdxT (189 aa).

Position 46 to 48 (46 to 48) interacts with L-glutamine; it reads GES. The active-site Nucleophile is the cysteine 78. Residues arginine 107 and 136–137 contribute to the L-glutamine site; that span reads IR. Catalysis depends on charge relay system residues histidine 173 and glutamate 175.

This sequence belongs to the glutaminase PdxT/SNO family. In terms of assembly, in the presence of PdxS, forms a dodecamer of heterodimers. Only shows activity in the heterodimer.

It carries out the reaction aldehydo-D-ribose 5-phosphate + D-glyceraldehyde 3-phosphate + L-glutamine = pyridoxal 5'-phosphate + L-glutamate + phosphate + 3 H2O + H(+). It catalyses the reaction L-glutamine + H2O = L-glutamate + NH4(+). The protein operates within cofactor biosynthesis; pyridoxal 5'-phosphate biosynthesis. Catalyzes the hydrolysis of glutamine to glutamate and ammonia as part of the biosynthesis of pyridoxal 5'-phosphate. The resulting ammonia molecule is channeled to the active site of PdxS. This chain is Pyridoxal 5'-phosphate synthase subunit PdxT, found in Roseiflexus sp. (strain RS-1).